Here is a 95-residue protein sequence, read N- to C-terminus: Co-chaperonin GroES (95 aa).

Belongs to the GroES chaperonin family. Heptamer of 7 subunits arranged in a ring. Interacts with the chaperonin GroEL.

It localises to the cytoplasm. In terms of biological role, together with the chaperonin GroEL, plays an essential role in assisting protein folding. The GroEL-GroES system forms a nano-cage that allows encapsulation of the non-native substrate proteins and provides a physical environment optimized to promote and accelerate protein folding. GroES binds to the apical surface of the GroEL ring, thereby capping the opening of the GroEL channel. This chain is Co-chaperonin GroES, found in Francisella tularensis subsp. holarctica (strain FTNF002-00 / FTA).